A 219-amino-acid polypeptide reads, in one-letter code: 2-C-methyl-D-erythritol 4-phosphate cytidylyltransferase (219 aa).

Belongs to the IspD/TarI cytidylyltransferase family. IspD subfamily.

It carries out the reaction 2-C-methyl-D-erythritol 4-phosphate + CTP + H(+) = 4-CDP-2-C-methyl-D-erythritol + diphosphate. Its pathway is isoprenoid biosynthesis; isopentenyl diphosphate biosynthesis via DXP pathway; isopentenyl diphosphate from 1-deoxy-D-xylulose 5-phosphate: step 2/6. Catalyzes the formation of 4-diphosphocytidyl-2-C-methyl-D-erythritol from CTP and 2-C-methyl-D-erythritol 4-phosphate (MEP). In Phocaeicola vulgatus (strain ATCC 8482 / DSM 1447 / JCM 5826 / CCUG 4940 / NBRC 14291 / NCTC 11154) (Bacteroides vulgatus), this protein is 2-C-methyl-D-erythritol 4-phosphate cytidylyltransferase.